Reading from the N-terminus, the 486-residue chain is Bifunctional protein HldE (486 aa).

Residues 1-331 (MAEHDDGDLI…VDAVKPASGA (331 aa)) form a ribokinase region. 208-211 (NRRE) serves as a coordination point for ATP. The active site involves D277. The segment at 357 to 486 (FTNGCFDLLH…TTATVTRLRS (130 aa)) is cytidylyltransferase.

In the N-terminal section; belongs to the carbohydrate kinase PfkB family. The protein in the C-terminal section; belongs to the cytidylyltransferase family. Homodimer.

The enzyme catalyses D-glycero-beta-D-manno-heptose 7-phosphate + ATP = D-glycero-beta-D-manno-heptose 1,7-bisphosphate + ADP + H(+). It carries out the reaction D-glycero-beta-D-manno-heptose 1-phosphate + ATP + H(+) = ADP-D-glycero-beta-D-manno-heptose + diphosphate. It participates in nucleotide-sugar biosynthesis; ADP-L-glycero-beta-D-manno-heptose biosynthesis; ADP-L-glycero-beta-D-manno-heptose from D-glycero-beta-D-manno-heptose 7-phosphate: step 1/4. The protein operates within nucleotide-sugar biosynthesis; ADP-L-glycero-beta-D-manno-heptose biosynthesis; ADP-L-glycero-beta-D-manno-heptose from D-glycero-beta-D-manno-heptose 7-phosphate: step 3/4. Catalyzes the phosphorylation of D-glycero-D-manno-heptose 7-phosphate at the C-1 position to selectively form D-glycero-beta-D-manno-heptose-1,7-bisphosphate. In terms of biological role, catalyzes the ADP transfer from ATP to D-glycero-beta-D-manno-heptose 1-phosphate, yielding ADP-D-glycero-beta-D-manno-heptose. This is Bifunctional protein HldE from Acidiphilium cryptum (strain JF-5).